The sequence spans 201 residues: Large ribosomal subunit protein eL15B (201 aa).

The segment at 161-182 (SRGLTSIGKKSRGIGKGHRYNN) is disordered. A compositionally biased stretch (basic residues) spans 169-179 (KKSRGIGKGHR). Serine 183 carries the post-translational modification Phosphoserine.

The protein belongs to the eukaryotic ribosomal protein eL15 family. As to quaternary structure, component of the large ribosomal subunit (LSU). Mature yeast ribosomes consist of a small (40S) and a large (60S) subunit. The 40S small subunit contains 1 molecule of ribosomal RNA (18S rRNA) and at least 33 different proteins. The large 60S subunit contains 3 rRNA molecules (25S, 5.8S and 5S rRNA) and at least 46 different proteins.

The protein localises to the cytoplasm. It localises to the nucleus. Its subcellular location is the nucleolus. Component of the ribosome, a large ribonucleoprotein complex responsible for the synthesis of proteins in the cell. The small ribosomal subunit (SSU) binds messenger RNAs (mRNAs) and translates the encoded message by selecting cognate aminoacyl-transfer RNA (tRNA) molecules. The large subunit (LSU) contains the ribosomal catalytic site termed the peptidyl transferase center (PTC), which catalyzes the formation of peptide bonds, thereby polymerizing the amino acids delivered by tRNAs into a polypeptide chain. The nascent polypeptides leave the ribosome through a tunnel in the LSU and interact with protein factors that function in enzymatic processing, targeting, and the membrane insertion of nascent chains at the exit of the ribosomal tunnel. The polypeptide is Large ribosomal subunit protein eL15B (rpl1502) (Schizosaccharomyces pombe (strain 972 / ATCC 24843) (Fission yeast)).